A 272-amino-acid polypeptide reads, in one-letter code: Small ribosomal subunit protein uS3 (272 aa).

Positions I43 to K111 constitute a KH type-2 domain. The segment at A218–A272 is disordered. Residues R229–E238 are compositionally biased toward basic and acidic residues. A compositionally biased stretch (low complexity) spans E253–A272.

The protein belongs to the universal ribosomal protein uS3 family. Part of the 30S ribosomal subunit. Forms a tight complex with proteins S10 and S14.

Binds the lower part of the 30S subunit head. Binds mRNA in the 70S ribosome, positioning it for translation. The chain is Small ribosomal subunit protein uS3 from Micrococcus luteus (strain ATCC 4698 / DSM 20030 / JCM 1464 / CCM 169 / CCUG 5858 / IAM 1056 / NBRC 3333 / NCIMB 9278 / NCTC 2665 / VKM Ac-2230) (Micrococcus lysodeikticus).